The following is a 286-amino-acid chain: UDP-3-O-acyl-N-acetylglucosamine deacetylase (286 aa).

3 residues coordinate Zn(2+): H79, H237, and D241. H264 (proton donor) is an active-site residue.

This sequence belongs to the LpxC family. Zn(2+) is required as a cofactor.

The enzyme catalyses a UDP-3-O-[(3R)-3-hydroxyacyl]-N-acetyl-alpha-D-glucosamine + H2O = a UDP-3-O-[(3R)-3-hydroxyacyl]-alpha-D-glucosamine + acetate. It participates in glycolipid biosynthesis; lipid IV(A) biosynthesis; lipid IV(A) from (3R)-3-hydroxytetradecanoyl-[acyl-carrier-protein] and UDP-N-acetyl-alpha-D-glucosamine: step 2/6. In terms of biological role, catalyzes the hydrolysis of UDP-3-O-myristoyl-N-acetylglucosamine to form UDP-3-O-myristoylglucosamine and acetate, the committed step in lipid A biosynthesis. In Chlamydia muridarum (strain MoPn / Nigg), this protein is UDP-3-O-acyl-N-acetylglucosamine deacetylase.